Consider the following 337-residue polypeptide: Glyceraldehyde-3-phosphate dehydrogenase 1, cytosolic (337 aa).

Residues 13 to 14, Asp35, and Arg82 contribute to the NAD(+) site; that span reads RI. Residues 153-155, Thr184, 213-214, and Arg236 each bind D-glyceraldehyde 3-phosphate; these read SCT and TG. The active-site Nucleophile is Cys154. Position 318 (Asn318) interacts with NAD(+).

This sequence belongs to the glyceraldehyde-3-phosphate dehydrogenase family. In terms of assembly, homotetramer. In terms of processing, phosphorylated after gibberellin treatment.

The protein resides in the cytoplasm. It carries out the reaction D-glyceraldehyde 3-phosphate + phosphate + NAD(+) = (2R)-3-phospho-glyceroyl phosphate + NADH + H(+). It participates in carbohydrate degradation; glycolysis; pyruvate from D-glyceraldehyde 3-phosphate: step 1/5. In terms of biological role, key enzyme in glycolysis that catalyzes the first step of the pathway by converting D-glyceraldehyde 3-phosphate (G3P) into 3-phospho-D-glyceroyl phosphate. Essential for the maintenance of cellular ATP levels and carbohydrate metabolism. The chain is Glyceraldehyde-3-phosphate dehydrogenase 1, cytosolic (GAPC1) from Oryza sativa subsp. japonica (Rice).